The chain runs to 884 residues: Probable LRR receptor-like serine/threonine-protein kinase PAM74 (884 aa).

The first 23 residues, 1–23 (MDSPCWLLLLLLGAFAIIGCVQA), serve as a signal peptide directing secretion. The Extracellular segment spans residues 24-510 (QDQQEFISLD…TEKNSKKKFP (487 aa)). N-linked (GlcNAc...) asparagine glycosylation is found at N143, N182, N200, N256, N289, N400, N403, N417, N433, N444, N465, and N470. LRR repeat units lie at residues 412-433 (RVLS…AIQN), 436-457 (HLEK…FLAQ), and 460-480 (SLVI…QGLR). Residues 511–531 (VVIVASVASVAIIVAVLVIIF) traverse the membrane as a helical segment. Residues 532–884 (VLSKKKSSTV…FDTELFPRAR (353 aa)) lie on the Cytoplasmic side of the membrane. T570 bears the Phosphothreonine mark. Positions 579–852 (NNFQRVVGEG…QVANELKECL (274 aa)) constitute a Protein kinase domain. ATP-binding positions include 585-593 (VGEGGFGVV) and K607. The residue at position 652 (Y652) is a Phosphotyrosine. Catalysis depends on D704, which acts as the Proton acceptor. S738 carries the phosphoserine modification. A phosphothreonine mark is found at T739 and T744. Phosphotyrosine is present on Y752.

This sequence belongs to the protein kinase superfamily. Ser/Thr protein kinase family. As to quaternary structure, binds to the ammonium transporter AMT1-1.

It localises to the membrane. It catalyses the reaction L-seryl-[protein] + ATP = O-phospho-L-seryl-[protein] + ADP + H(+). The catalysed reaction is L-threonyl-[protein] + ATP = O-phospho-L-threonyl-[protein] + ADP + H(+). Functionally, required for accurate photosynthesis. The polypeptide is Probable LRR receptor-like serine/threonine-protein kinase PAM74 (PAM74) (Arabidopsis thaliana (Mouse-ear cress)).